Reading from the N-terminus, the 183-residue chain is Capsid protein (183 aa).

Residues Asn-136–Cys-183 are disordered. The segment covering Val-149 to Ser-176 has biased composition (basic residues). Residues Ser-155, Ser-162, and Ser-170 each carry the phosphoserine; by host modification. The stretch at Ser-155–Pro-161 is one 1; half-length repeat. The interval Ser-155–Gln-177 is 3 X 8 AA repeats of S-P-R-R-R-[PR]-S-Q. The Bipartite nuclear localization signal signature appears at Arg-158 to Arg-175. Repeat copies occupy residues Ser-162 to Gln-169 and Ser-170 to Gln-177. The segment at Gln-177–Cys-183 is RNA binding.

The protein belongs to the orthohepadnavirus core antigen family. As to quaternary structure, homodimerizes, then multimerizes. Interacts with cytosol exposed regions of viral L glycoprotein present in the reticulum-to-Golgi compartment. Interacts with human FLNB. Phosphorylated form interacts with host importin alpha; this interaction depends on the exposure of the NLS, which itself depends upon genome maturation and/or phosphorylation of the capsid protein. Interacts with host NUP153. In terms of processing, phosphorylated by host SRPK1, SRPK2, and maybe protein kinase C or GAPDH. Phosphorylation is critical for pregenomic RNA packaging. Protein kinase C phosphorylation is stimulated by HBx protein and may play a role in transport of the viral genome to the nucleus at the late step during the viral replication cycle.

It localises to the virion. Its subcellular location is the host cytoplasm. Self assembles to form an icosahedral capsid. Most capsids appear to be large particles with an icosahedral symmetry of T=4 and consist of 240 copies of capsid protein, though a fraction forms smaller T=3 particles consisting of 180 capsid proteins. Entering capsids are transported along microtubules to the nucleus. Phosphorylation of the capsid is thought to induce exposure of nuclear localization signal in the C-terminal portion of the capsid protein that allows binding to the nuclear pore complex via the importin (karyopherin-) alpha and beta. Capsids are imported in intact form through the nuclear pore into the nuclear basket, where it probably binds NUP153. Only capsids that contain the mature viral genome can release the viral DNA and capsid protein into the nucleoplasm. Immature capsids get stuck in the basket. Capsids encapsulate the pre-genomic RNA and the P protein. Pre-genomic RNA is reverse-transcribed into DNA while the capsid is still in the cytoplasm. The capsid can then either be directed to the nucleus, providing more genomes for transcription, or bud through the endoplasmic reticulum to provide new virions. This is Capsid protein from Homo sapiens (Human).